The sequence spans 382 residues: NADH-ubiquinone oxidoreductase chain 2 (382 aa).

Helical transmembrane passes span 1–21 (MIEL…LLSL), 33–53 (FICQ…FALC), 54–74 (ILTV…FLLL), 88–108 (LVSF…LCGL), 123–143 (LKFL…FSAM), 158–178 (FWIL…MWSV), 188–208 (LLLY…ASSW), 212–232 (FSVG…AYGQ), 239–259 (FAYS…TAGF), 260–280 (HTLY…WNLT), 284–304 (LFAL…FFGK), and 305–325 (AWIF…AALF).

It belongs to the complex I subunit 2 family.

It localises to the mitochondrion inner membrane. It catalyses the reaction a ubiquinone + NADH + 5 H(+)(in) = a ubiquinol + NAD(+) + 4 H(+)(out). In terms of biological role, core subunit of the mitochondrial membrane respiratory chain NADH dehydrogenase (Complex I) that is believed to belong to the minimal assembly required for catalysis. Complex I functions in the transfer of electrons from NADH to the respiratory chain. The immediate electron acceptor for the enzyme is believed to be ubiquinone. This Chlamydomonas reinhardtii (Chlamydomonas smithii) protein is NADH-ubiquinone oxidoreductase chain 2 (ND2).